The primary structure comprises 75 residues: Acyl carrier protein (75 aa).

A Carrier domain is found at 1 to 75 (MSVFDKVKSI…DAVNYIKENQ (75 aa)). Position 35 is an O-(pantetheine 4'-phosphoryl)serine (serine 35).

The protein belongs to the acyl carrier protein (ACP) family. In terms of processing, 4'-phosphopantetheine is transferred from CoA to a specific serine of apo-ACP by AcpS. This modification is essential for activity because fatty acids are bound in thioester linkage to the sulfhydryl of the prosthetic group.

It localises to the cytoplasm. It participates in lipid metabolism; fatty acid biosynthesis. Carrier of the growing fatty acid chain in fatty acid biosynthesis. The protein is Acyl carrier protein of Desulfitobacterium hafniense (strain Y51).